The following is a 350-amino-acid chain: Biotin synthase (350 aa).

Residues 41-268 (NEVQISRLLS…KSRVRLSAGR (228 aa)) enclose the Radical SAM core domain. [4Fe-4S] cluster is bound by residues Cys-56, Cys-60, and Cys-63. Cys-100, Cys-131, Cys-191, and Arg-263 together coordinate [2Fe-2S] cluster.

Belongs to the radical SAM superfamily. Biotin synthase family. Homodimer. It depends on [4Fe-4S] cluster as a cofactor. Requires [2Fe-2S] cluster as cofactor.

It catalyses the reaction (4R,5S)-dethiobiotin + (sulfur carrier)-SH + 2 reduced [2Fe-2S]-[ferredoxin] + 2 S-adenosyl-L-methionine = (sulfur carrier)-H + biotin + 2 5'-deoxyadenosine + 2 L-methionine + 2 oxidized [2Fe-2S]-[ferredoxin]. It participates in cofactor biosynthesis; biotin biosynthesis; biotin from 7,8-diaminononanoate: step 2/2. Catalyzes the conversion of dethiobiotin (DTB) to biotin by the insertion of a sulfur atom into dethiobiotin via a radical-based mechanism. In Shewanella piezotolerans (strain WP3 / JCM 13877), this protein is Biotin synthase.